The primary structure comprises 1385 residues: L-2-aminoadipate reductase large subunit (1385 aa).

The Carrier domain maps to 843–920; it reads SSFSPLEQEI…ELAKEISRVR (78 aa). Ser-880 is modified (O-(pantetheine 4'-phosphoryl)serine).

This sequence belongs to the ATP-dependent AMP-binding enzyme family. As to quaternary structure, heterodimer of an alpha and a beta subunit. It depends on pantetheine 4'-phosphate as a cofactor.

It carries out the reaction (S)-2-amino-6-oxohexanoate + NADP(+) + H2O = L-2-aminoadipate + NADPH + 2 H(+). The enzyme catalyses (S)-2-amino-6-oxohexanoate + NAD(+) + H2O = L-2-aminoadipate + NADH + 2 H(+). It catalyses the reaction (S)-2-amino-6-oxohexanoate + AMP + diphosphate + NADP(+) = L-2-aminoadipate + ATP + NADPH + H(+). Its pathway is amino-acid biosynthesis; L-lysine biosynthesis via AAA pathway; L-lysine from L-alpha-aminoadipate (fungal route): step 1/3. Functionally, catalyzes the activation of alpha-aminoadipate by ATP-dependent adenylation and the reduction of activated alpha-aminoadipate by NADPH. The activated alpha-aminoadipate is bound to the phosphopantheinyl group of the enzyme itself before it is reduced to (S)-2-amino-6-oxohexanoate. The sequence is that of L-2-aminoadipate reductase large subunit (LYS2) from Eremothecium gossypii (strain ATCC 10895 / CBS 109.51 / FGSC 9923 / NRRL Y-1056) (Yeast).